The chain runs to 636 residues: Carbon monoxide dehydrogenase 2 (636 aa).

The [4Fe-4S] cluster site is built by Cys-39, Cys-47, Cys-48, Cys-51, Cys-56, and Cys-70. [Ni-4Fe-5S] cluster contacts are provided by His-261, Cys-295, Cys-333, Cys-446, Cys-476, and Cys-526.

Belongs to the Ni-containing carbon monoxide dehydrogenase family. Homodimer. [4Fe-4S] cluster serves as cofactor. The cofactor is [Ni-4Fe-5S] cluster.

The protein resides in the cytoplasm. It is found in the cell membrane. The enzyme catalyses CO + 2 oxidized [2Fe-2S]-[ferredoxin] + H2O = 2 reduced [2Fe-2S]-[ferredoxin] + CO2 + 2 H(+). With respect to regulation, inactivated by O(2). In terms of biological role, CODH oxidizes carbon monoxide coupled, via CooF, to the reduction of a hydrogen cation by a hydrogenase (possibly CooH). In Carboxydothermus hydrogenoformans (strain ATCC BAA-161 / DSM 6008 / Z-2901), this protein is Carbon monoxide dehydrogenase 2 (cooS2).